The chain runs to 74 residues: Anaphase-promoting complex subunit 13 (74 aa).

The disordered stretch occupies residues 33–56 (LSELPEPEQDNGGTTESVKEQEMK).

This sequence belongs to the APC13 family. The mammalian APC/C is composed at least of 14 distinct subunits ANAPC1, ANAPC2, CDC27/APC3, ANAPC4, ANAPC5, CDC16/APC6, ANAPC7, CDC23/APC8, ANAPC10, ANAPC11, CDC26/APC12, ANAPC13, ANAPC15 and ANAPC16 that assemble into a complex of at least 19 chains with a combined molecular mass of around 1.2 MDa; APC/C interacts with FZR1 and FBXO5.

The protein resides in the nucleus. The protein operates within protein modification; protein ubiquitination. Functionally, component of the anaphase promoting complex/cyclosome (APC/C), a cell cycle-regulated E3 ubiquitin ligase that controls progression through mitosis and the G1 phase of the cell cycle. The APC/C complex acts by mediating ubiquitination and subsequent degradation of target proteins: it mainly mediates the formation of 'Lys-11'-linked polyubiquitin chains and, to a lower extent, the formation of 'Lys-48'- and 'Lys-63'-linked polyubiquitin chains. The APC/C complex catalyzes assembly of branched 'Lys-11'-/'Lys-48'-linked branched ubiquitin chains on target proteins. The protein is Anaphase-promoting complex subunit 13 (Anapc13) of Mus musculus (Mouse).